The following is a 693-amino-acid chain: Elongation factor G (693 aa).

One can recognise a tr-type G domain in the interval 8 to 282 (EKTRNIGIMA…AVIDYLPSPL (275 aa)). GTP-binding positions include 17–24 (AHVDAGKT), 81–85 (DTPGH), and 135–138 (NKMD).

Belongs to the TRAFAC class translation factor GTPase superfamily. Classic translation factor GTPase family. EF-G/EF-2 subfamily.

Its subcellular location is the cytoplasm. Catalyzes the GTP-dependent ribosomal translocation step during translation elongation. During this step, the ribosome changes from the pre-translocational (PRE) to the post-translocational (POST) state as the newly formed A-site-bound peptidyl-tRNA and P-site-bound deacylated tRNA move to the P and E sites, respectively. Catalyzes the coordinated movement of the two tRNA molecules, the mRNA and conformational changes in the ribosome. The chain is Elongation factor G from Streptococcus pneumoniae (strain P1031).